Consider the following 495-residue polypeptide: Galactose-1-phosphate uridylyltransferase (495 aa).

The protein belongs to the galactose-1-phosphate uridylyltransferase type 2 family.

It is found in the cytoplasm. It carries out the reaction alpha-D-galactose 1-phosphate + UDP-alpha-D-glucose = alpha-D-glucose 1-phosphate + UDP-alpha-D-galactose. The protein operates within carbohydrate metabolism; galactose metabolism. This Ligilactobacillus salivarius (strain UCC118) (Lactobacillus salivarius) protein is Galactose-1-phosphate uridylyltransferase.